We begin with the raw amino-acid sequence, 245 residues long: Geranylgeranylglyceryl phosphate synthase (245 aa).

2 residues coordinate Mg(2+): Asp22 and Ser51. Sn-glycerol 1-phosphate-binding positions include 169–175, 200–201, and 222–223; these read YLEAGSG, GG, and GT.

The protein belongs to the GGGP/HepGP synthase family. Group II subfamily. Homotetramer. Homohexamer. The cofactor is Mg(2+).

The protein resides in the cytoplasm. It carries out the reaction sn-glycerol 1-phosphate + (2E,6E,10E)-geranylgeranyl diphosphate = sn-3-O-(geranylgeranyl)glycerol 1-phosphate + diphosphate. Its pathway is membrane lipid metabolism; glycerophospholipid metabolism. Its function is as follows. Prenyltransferase that catalyzes the transfer of the geranylgeranyl moiety of geranylgeranyl diphosphate (GGPP) to the C3 hydroxyl of sn-glycerol-1-phosphate (G1P). This reaction is the first ether-bond-formation step in the biosynthesis of archaeal membrane lipids. The polypeptide is Geranylgeranylglyceryl phosphate synthase (Methanothermobacter thermautotrophicus (strain ATCC 29096 / DSM 1053 / JCM 10044 / NBRC 100330 / Delta H) (Methanobacterium thermoautotrophicum)).